Reading from the N-terminus, the 475-residue chain is GTPase Der (475 aa).

EngA-type G domains lie at 3–167 (LTIA…GGER) and 205–380 (LRIA…RVWN). GTP-binding positions include 9-16 (GRPNVGKS), 56-60 (DTAGL), 119-122 (NKSE), 211-218 (GRPNTGKS), 258-262 (DTAGL), and 323-326 (NKWD). The KH-like domain occupies 381 to 465 (RRISTGKLNR…PIRISLRASD (85 aa)).

It belongs to the TRAFAC class TrmE-Era-EngA-EngB-Septin-like GTPase superfamily. EngA (Der) GTPase family. In terms of assembly, associates with the 50S ribosomal subunit.

GTPase that plays an essential role in the late steps of ribosome biogenesis. The protein is GTPase Der of Bartonella henselae (strain ATCC 49882 / DSM 28221 / CCUG 30454 / Houston 1) (Rochalimaea henselae).